A 236-amino-acid chain; its full sequence is UPF0173 metal-dependent hydrolase AZC_2841 (236 aa).

This sequence belongs to the UPF0173 family.

This is UPF0173 metal-dependent hydrolase AZC_2841 from Azorhizobium caulinodans (strain ATCC 43989 / DSM 5975 / JCM 20966 / LMG 6465 / NBRC 14845 / NCIMB 13405 / ORS 571).